A 126-amino-acid chain; its full sequence is DNA-directed RNA polymerase I subunit RPA12 (126 aa).

Residues cysteine 20, cysteine 23, cysteine 38, cysteine 41, cysteine 87, and cysteine 90 each contribute to the Zn(2+) site. Residues cysteine 20 to cysteine 41 form a C4-type zinc finger. The segment at valine 83–lysine 123 adopts a TFIIS-type zinc-finger fold. The Hairpin motif lies at aspartate 106–glutamate 107. Cysteine 115 and cysteine 118 together coordinate Zn(2+).

It belongs to the archaeal RpoM/eukaryotic RPA12/RPB9/RPC11 RNA polymerase family. Component of the RNA polymerase I (Pol I) complex consisting of 13 subunits: a ten-subunit catalytic core composed of POLR1A/RPA1, POLR1B/RPA2, POLR1C/RPAC1, POLR1D/RPAC2, POLR1H/RPA12, POLR2E/RPABC1, POLR2F/RPABC2, POLR2H/RPABC3, POLR2K/RPABC4 and POLR2L/RPABC5; a mobile stalk subunit POLR1F/RPA43 protruding from the core and additional subunits homologous to general transcription factors POLR1E/RPA49 and POLR1G/RPA34. Part of Pol I pre-initiation complex (PIC), in which Pol I core assembles with RRN3 and promoter-bound UTBF and SL1/TIF-IB complex.

The protein localises to the nucleus. The protein resides in the nucleolus. In terms of biological role, core component of RNA polymerase I (Pol I), a DNA-dependent RNA polymerase which synthesizes ribosomal RNA precursors using the four ribonucleoside triphosphates as substrates. Can mediate Pol I proofreading of the nascent RNA transcript. Anchors into the Pol I active site to monitor transcription fidelity and cleave mis-incorporated 5'-ribonucleotides. The sequence is that of DNA-directed RNA polymerase I subunit RPA12 from Macaca mulatta (Rhesus macaque).